Here is a 278-residue protein sequence, read N- to C-terminus: 4-deoxy-L-threo-5-hexosulose-uronate ketol-isomerase (278 aa).

Residues His196, His198, Glu203, and His245 each coordinate Zn(2+).

It belongs to the KduI family. Requires Zn(2+) as cofactor.

The catalysed reaction is 5-dehydro-4-deoxy-D-glucuronate = 3-deoxy-D-glycero-2,5-hexodiulosonate. It functions in the pathway glycan metabolism; pectin degradation; 2-dehydro-3-deoxy-D-gluconate from pectin: step 4/5. In terms of biological role, catalyzes the isomerization of 5-dehydro-4-deoxy-D-glucuronate to 3-deoxy-D-glycero-2,5-hexodiulosonate. This is 4-deoxy-L-threo-5-hexosulose-uronate ketol-isomerase from Shigella flexneri serotype 5b (strain 8401).